A 645-amino-acid chain; its full sequence is 1-deoxy-D-xylulose-5-phosphate synthase 1 (645 aa).

The tract at residues 1 to 20 (MTDTKTPTLDRVAGPADLRS) is disordered. Thiamine diphosphate is bound by residues H78 and 119–121 (AHS). D150 serves as a coordination point for Mg(2+). Thiamine diphosphate-binding positions include 151–152 (GS), N179, Y291, and E373. Residue N179 participates in Mg(2+) binding.

Belongs to the transketolase family. DXPS subfamily. As to quaternary structure, homodimer. Mg(2+) is required as a cofactor. Thiamine diphosphate serves as cofactor.

The enzyme catalyses D-glyceraldehyde 3-phosphate + pyruvate + H(+) = 1-deoxy-D-xylulose 5-phosphate + CO2. The protein operates within metabolic intermediate biosynthesis; 1-deoxy-D-xylulose 5-phosphate biosynthesis; 1-deoxy-D-xylulose 5-phosphate from D-glyceraldehyde 3-phosphate and pyruvate: step 1/1. Functionally, catalyzes the acyloin condensation reaction between C atoms 2 and 3 of pyruvate and glyceraldehyde 3-phosphate to yield 1-deoxy-D-xylulose-5-phosphate (DXP). This is 1-deoxy-D-xylulose-5-phosphate synthase 1 from Roseobacter denitrificans (strain ATCC 33942 / OCh 114) (Erythrobacter sp. (strain OCh 114)).